Here is a 349-residue protein sequence, read N- to C-terminus: Sesquiterpene synthase MAC_05714 (349 aa).

Mg(2+) is bound by residues Asp-91 and Asp-96. The DDXXXD motif motif lies at 91–96 (DDLFVD). Arg-184 lines the substrate pocket. Mg(2+)-binding residues include Asn-230, Ser-234, and Glu-238.

The protein belongs to the terpene synthase family. Requires Mg(2+) as cofactor.

It carries out the reaction (2E,6E)-farnesyl diphosphate + H2O = (+)-corvol ether B + diphosphate. The enzyme catalyses (2E,6E)-farnesyl diphosphate + H2O = (+)-corvol ether A + diphosphate. Functionally, terpene synthase that catalyzes the conversion of (2E,6E)-farnesyl diphosphate (FPP) into sesquiterpenes which are important for fungi-environment interactions. Produces a mixture consisting of 8 sesquiterpenes including corvol ethers A and B, as well as traces of epizonarene, gamma-cadinene, delta-cadinene, alpha-cadinene, alpha-cadinol, and an unidentified sesquiterpene. Produces both corvol ether A and corvol ether B in similar concentrations. The protein is Sesquiterpene synthase MAC_05714 of Metarhizium acridum (strain CQMa 102).